A 159-amino-acid polypeptide reads, in one-letter code: uncharacterized protein (159 aa).

3 helical membrane-spanning segments follow: residues 10-30 (FLSMFFMAILFFPAFNASLFF), 52-72 (MLILCFGFMSFSFLNIHVILL), and 96-116 (LTLIFLLIAIVIAPLIAPFVT).

The protein resides in the membrane. This is an uncharacterized protein from Escherichia coli (strain K12).